The chain runs to 66 residues: Small ribosomal subunit protein eS27 (66 aa).

The Zn(2+) site is built by Cys-21, Cys-24, Cys-40, and Cys-43. The C4-type zinc finger occupies 21-43; that stretch reads CPNCGNEQTVFSHATFPVRCLSC.

This sequence belongs to the eukaryotic ribosomal protein eS27 family. As to quaternary structure, part of the 30S ribosomal subunit. Zn(2+) serves as cofactor.

The protein is Small ribosomal subunit protein eS27 of Sulfurisphaera tokodaii (strain DSM 16993 / JCM 10545 / NBRC 100140 / 7) (Sulfolobus tokodaii).